The following is a 479-amino-acid chain: Deoxyribodipyrimidine photo-lyase (479 aa).

The Photolyase/cryptochrome alpha/beta domain maps to 6 to 137 (SLKAVWFRRD…PFYTFEDAYL (132 aa)). Tyrosine 229 is an FAD binding site. DNA is bound at residue arginine 233. Residues 241–245 (TSRLS) and 278–285 (ELAWRDFY) each bind FAD. Interaction with DNA regions lie at residues 278 to 285 (ELAWRDFY) and 344 to 345 (NR). An FAD-binding site is contributed by 375 to 377 (DYD). Glutamine 407 contributes to the DNA binding site.

This sequence belongs to the DNA photolyase class-1 family. Monomer. The cofactor is FAD. (6R)-5,10-methylene-5,6,7,8-tetrahydrofolate serves as cofactor.

It catalyses the reaction cyclobutadipyrimidine (in DNA) = 2 pyrimidine residues (in DNA).. Involved in repair of UV radiation-induced DNA damage. Catalyzes the light-dependent monomerization (300-600 nm) of cyclobutyl pyrimidine dimers (in cis-syn configuration), which are formed between adjacent bases on the same DNA strand upon exposure to ultraviolet radiation. The protein is Deoxyribodipyrimidine photo-lyase (phr) of Alkalihalophilus pseudofirmus (strain ATCC BAA-2126 / JCM 17055 / OF4) (Bacillus pseudofirmus).